We begin with the raw amino-acid sequence, 144 residues long: Large ribosomal subunit protein uL11 (144 aa).

This sequence belongs to the universal ribosomal protein uL11 family. As to quaternary structure, part of the ribosomal stalk of the 50S ribosomal subunit. Interacts with L10 and the large rRNA to form the base of the stalk. L10 forms an elongated spine to which L12 dimers bind in a sequential fashion forming a multimeric L10(L12)X complex. Post-translationally, one or more lysine residues are methylated.

In terms of biological role, forms part of the ribosomal stalk which helps the ribosome interact with GTP-bound translation factors. The sequence is that of Large ribosomal subunit protein uL11 from Streptomyces avermitilis (strain ATCC 31267 / DSM 46492 / JCM 5070 / NBRC 14893 / NCIMB 12804 / NRRL 8165 / MA-4680).